Reading from the N-terminus, the 397-residue chain is Golgi-associated RAB2 interactor protein 2 (397 aa).

2 disordered regions span residues 1 to 24 (MKKS…PDSK) and 342 to 397 (QTTL…KLLN). Composition is skewed to basic and acidic residues over residues 10–24 (TRID…PDSK), 353–369 (EKSK…RTMD), and 376–397 (KAEE…KLLN).

The protein belongs to the GARIN family. Interacts with CALM1.

Its subcellular location is the cell projection. It is found in the cilium. It localises to the flagellum. Functionally, seems to play a role in sperm motility. In Bos taurus (Bovine), this protein is Golgi-associated RAB2 interactor protein 2 (GARIN2).